Here is a 280-residue protein sequence, read N- to C-terminus: Probable endonuclease 4 (280 aa).

The Zn(2+) site is built by histidine 69, histidine 109, glutamate 145, aspartate 179, histidine 182, histidine 216, aspartate 229, histidine 231, and glutamate 261.

This sequence belongs to the AP endonuclease 2 family. The cofactor is Zn(2+).

The enzyme catalyses Endonucleolytic cleavage to 5'-phosphooligonucleotide end-products.. Its function is as follows. Endonuclease IV plays a role in DNA repair. It cleaves phosphodiester bonds at apurinic or apyrimidinic (AP) sites, generating a 3'-hydroxyl group and a 5'-terminal sugar phosphate. In Aliarcobacter butzleri (strain RM4018) (Arcobacter butzleri), this protein is Probable endonuclease 4.